The following is a 192-amino-acid chain: Leucine-rich repeat-containing protein 51 (192 aa).

LRR repeat units follow at residues 49–71 (SLTQ…NQVA), 80–101 (NLAW…LTTF), and 103–124 (NLSV…NKLA). The region spanning 137–175 (NPMEEEKGYRQYVLCTLSRITTFDFAGVTKADRTTAEVW) is the LRRCT domain.

The protein resides in the cytoplasm. This Pan troglodytes (Chimpanzee) protein is Leucine-rich repeat-containing protein 51.